The sequence spans 546 residues: E3 ubiquitin-protein ligase NEURL1B (546 aa).

An NHR 1 domain is found at Ala38–Ser194. A Phosphothreonine modification is found at Thr199. The NHR 2 domain occupies Glu270–Gly424. The disordered stretch occupies residues Ser429 to Arg490. Residues Ser457–Ser471 are compositionally biased toward low complexity. The RING-type zinc-finger motif lies at Cys494 to Arg534.

Interacts with DLL1 and DLL4. In terms of tissue distribution, expressed in the limb buds and dorsal root ganglia. Expressed in brain and kidney and at low levels in the heart.

Its subcellular location is the cytoplasm. It catalyses the reaction S-ubiquitinyl-[E2 ubiquitin-conjugating enzyme]-L-cysteine + [acceptor protein]-L-lysine = [E2 ubiquitin-conjugating enzyme]-L-cysteine + N(6)-ubiquitinyl-[acceptor protein]-L-lysine.. It functions in the pathway protein modification; protein ubiquitination. Its function is as follows. E3 ubiquitin-protein ligase involved in regulation of the Notch pathway through influencing the stability and activity of several Notch ligands. The polypeptide is E3 ubiquitin-protein ligase NEURL1B (Neurl1b) (Mus musculus (Mouse)).